Consider the following 624-residue polypeptide: Phosphomethylpyrimidine synthase (624 aa).

The segment at Ser-75–Leu-99 is disordered. Substrate is bound by residues Asn-226, Met-255, Tyr-284, His-320, Ser-340–Gly-342, Asp-381–Arg-384, and Glu-420. His-424 is a binding site for Zn(2+). Tyr-447 is a substrate binding site. His-488 is a binding site for Zn(2+). The [4Fe-4S] cluster site is built by Cys-568, Cys-571, and Cys-576.

Belongs to the ThiC family. As to quaternary structure, homodimer. It depends on [4Fe-4S] cluster as a cofactor.

The catalysed reaction is 5-amino-1-(5-phospho-beta-D-ribosyl)imidazole + S-adenosyl-L-methionine = 4-amino-2-methyl-5-(phosphooxymethyl)pyrimidine + CO + 5'-deoxyadenosine + formate + L-methionine + 3 H(+). Its pathway is cofactor biosynthesis; thiamine diphosphate biosynthesis. Catalyzes the synthesis of the hydroxymethylpyrimidine phosphate (HMP-P) moiety of thiamine from aminoimidazole ribotide (AIR) in a radical S-adenosyl-L-methionine (SAM)-dependent reaction. The sequence is that of Phosphomethylpyrimidine synthase from Albidiferax ferrireducens (strain ATCC BAA-621 / DSM 15236 / T118) (Rhodoferax ferrireducens).